Reading from the N-terminus, the 76-residue chain is Cytochrome c oxidase subunit 6C-1 (76 aa).

Topologically, residues 2–10 (SLAKPAMRG) are mitochondrial matrix. Residues 11–51 (LLGKRLRFHLPIAFTLSLVAALGFKYGVTEPRKQAYADFYK) traverse the membrane as a helical segment. Topologically, residues 52-76 (QYDAVKDFNAMREAGIFESVRPSGE) are mitochondrial intermembrane.

Belongs to the cytochrome c oxidase subunit 6c family. As to quaternary structure, component of the cytochrome c oxidase (complex IV, CIV), a multisubunit enzyme composed of 14 subunits. The complex is composed of a catalytic core of 3 subunits MT-CO1, MT-CO2 and MT-CO3, encoded in the mitochondrial DNA, and 11 supernumerary subunits COX4I, COX5A, COX5B, COX6A, COX6B, COX6C, COX7A, COX7B, COX7C, COX8 and NDUFA4, which are encoded in the nuclear genome. The complex exists as a monomer or a dimer and forms supercomplexes (SCs) in the inner mitochondrial membrane with NADH-ubiquinone oxidoreductase (complex I, CI) and ubiquinol-cytochrome c oxidoreductase (cytochrome b-c1 complex, complex III, CIII), resulting in different assemblies (supercomplex SCI(1)III(2)IV(1) and megacomplex MCI(2)III(2)IV(2)).

Its subcellular location is the mitochondrion inner membrane. It participates in energy metabolism; oxidative phosphorylation. Its function is as follows. Component of the cytochrome c oxidase, the last enzyme in the mitochondrial electron transport chain which drives oxidative phosphorylation. The respiratory chain contains 3 multisubunit complexes succinate dehydrogenase (complex II, CII), ubiquinol-cytochrome c oxidoreductase (cytochrome b-c1 complex, complex III, CIII) and cytochrome c oxidase (complex IV, CIV), that cooperate to transfer electrons derived from NADH and succinate to molecular oxygen, creating an electrochemical gradient over the inner membrane that drives transmembrane transport and the ATP synthase. Cytochrome c oxidase is the component of the respiratory chain that catalyzes the reduction of oxygen to water. Electrons originating from reduced cytochrome c in the intermembrane space (IMS) are transferred via the dinuclear copper A center (CU(A)) of subunit 2 and heme A of subunit 1 to the active site in subunit 1, a binuclear center (BNC) formed by heme A3 and copper B (CU(B)). The BNC reduces molecular oxygen to 2 water molecules using 4 electrons from cytochrome c in the IMS and 4 protons from the mitochondrial matrix. The protein is Cytochrome c oxidase subunit 6C-1 of Thunnus obesus (Bigeye tuna).